The sequence spans 282 residues: Bifunctional protein FolD (282 aa).

Residues 165-167 (NRS), S190, and I231 each bind NADP(+).

It belongs to the tetrahydrofolate dehydrogenase/cyclohydrolase family. As to quaternary structure, homodimer.

The catalysed reaction is (6R)-5,10-methylene-5,6,7,8-tetrahydrofolate + NADP(+) = (6R)-5,10-methenyltetrahydrofolate + NADPH. It carries out the reaction (6R)-5,10-methenyltetrahydrofolate + H2O = (6R)-10-formyltetrahydrofolate + H(+). The protein operates within one-carbon metabolism; tetrahydrofolate interconversion. In terms of biological role, catalyzes the oxidation of 5,10-methylenetetrahydrofolate to 5,10-methenyltetrahydrofolate and then the hydrolysis of 5,10-methenyltetrahydrofolate to 10-formyltetrahydrofolate. The sequence is that of Bifunctional protein FolD from Clostridium botulinum (strain Kyoto / Type A2).